Consider the following 266-residue polypeptide: Glucosamine-6-phosphate deaminase (266 aa).

D72 acts as the Proton acceptor; for enolization step in catalysis. Residue D141 is the For ring-opening step of the active site. Catalysis depends on H143, which acts as the Proton acceptor; for ring-opening step. E148 functions as the For ring-opening step in the catalytic mechanism.

Belongs to the glucosamine/galactosamine-6-phosphate isomerase family. NagB subfamily. Homohexamer.

The enzyme catalyses alpha-D-glucosamine 6-phosphate + H2O = beta-D-fructose 6-phosphate + NH4(+). Its pathway is amino-sugar metabolism; N-acetylneuraminate degradation; D-fructose 6-phosphate from N-acetylneuraminate: step 5/5. Its activity is regulated as follows. Allosterically activated by N-acetylglucosamine 6-phosphate (GlcNAc6P). Functionally, catalyzes the reversible isomerization-deamination of glucosamine 6-phosphate (GlcN6P) to form fructose 6-phosphate (Fru6P) and ammonium ion. In Yersinia pseudotuberculosis serotype O:1b (strain IP 31758), this protein is Glucosamine-6-phosphate deaminase.